Consider the following 208-residue polypeptide: ATP-dependent Clp protease proteolytic subunit (208 aa).

The Nucleophile role is filled by serine 105. Histidine 130 is a catalytic residue.

This sequence belongs to the peptidase S14 family. In terms of assembly, fourteen ClpP subunits assemble into 2 heptameric rings which stack back to back to give a disk-like structure with a central cavity, resembling the structure of eukaryotic proteasomes.

The protein localises to the cytoplasm. The catalysed reaction is Hydrolysis of proteins to small peptides in the presence of ATP and magnesium. alpha-casein is the usual test substrate. In the absence of ATP, only oligopeptides shorter than five residues are hydrolyzed (such as succinyl-Leu-Tyr-|-NHMec, and Leu-Tyr-Leu-|-Tyr-Trp, in which cleavage of the -Tyr-|-Leu- and -Tyr-|-Trp bonds also occurs).. In terms of biological role, cleaves peptides in various proteins in a process that requires ATP hydrolysis. Has a chymotrypsin-like activity. Plays a major role in the degradation of misfolded proteins. The polypeptide is ATP-dependent Clp protease proteolytic subunit (Xylella fastidiosa (strain M23)).